The chain runs to 124 residues: Small ribosomal subunit protein uS12c (124 aa).

Belongs to the universal ribosomal protein uS12 family. As to quaternary structure, part of the 30S ribosomal subunit.

The protein resides in the plastid. It is found in the chloroplast. In terms of biological role, with S4 and S5 plays an important role in translational accuracy. Located at the interface of the 30S and 50S subunits. This chain is Small ribosomal subunit protein uS12c (rps12), found in Oryza nivara (Indian wild rice).